The primary structure comprises 321 residues: MAAAEAPRLAGMVVALQANFLEVELETFNPSSLVSWRRSTDAEPLRLLCTRRTRLDHRGAAVHVGDRVWVEAIDWQERRAVVGDVEPRQSWINRPPVANVTAVVVALAVKQPCFDADQASRFLLSAEQTGVDVHLILTKRDLITSDQLEQQLVRLRGWGYRPMAVSVQTGEGLGALKNKLSSTRLAVFCGPSGVGKTSLLNQLLPQLSLRVGAVSGRLQRGRHTTRHVELFRLCEGSLVADTPGFNRPELPADPRKLAVLFPEFDGQIEDYPCRFRDCFHRDEPGCGVDKSWERYPIYKRFLEEMECLSRSSRGGSGSGLL.

Positions 89 to 248 (QSWINRPPVA…VADTPGFNRP (160 aa)) constitute a CP-type G domain. GTP is bound by residues 138 to 141 (TKRD) and 190 to 198 (GPSGVGKTS). Zn(2+) is bound by residues Cys-273, Cys-278, His-280, and Cys-286.

The protein belongs to the TRAFAC class YlqF/YawG GTPase family. RsgA subfamily. Monomer. Associates with 30S ribosomal subunit, binds 16S rRNA. The cofactor is Zn(2+).

The protein localises to the cytoplasm. In terms of biological role, one of several proteins that assist in the late maturation steps of the functional core of the 30S ribosomal subunit. Helps release RbfA from mature subunits. May play a role in the assembly of ribosomal proteins into the subunit. Circularly permuted GTPase that catalyzes slow GTP hydrolysis, GTPase activity is stimulated by the 30S ribosomal subunit. The protein is Small ribosomal subunit biogenesis GTPase RsgA of Prochlorococcus marinus (strain MIT 9303).